Consider the following 783-residue polypeptide: Isoamylase 1, chloroplastic (783 aa).

A chloroplast-targeting transit peptide spans 1-43 (MDAIKCSSSFLHHTKLNTLFSNHTFPKISAPNFKPLFRPISIS). Catalysis depends on D410, which acts as the Nucleophile. The active-site Proton donor is E466.

Belongs to the glycosyl hydrolase 13 family. In terms of assembly, associates with ISA2 to form the heteromultimeric complex Iso1 required for amylopectin synthesis.

The protein localises to the plastid. Its subcellular location is the chloroplast. It carries out the reaction Hydrolysis of (1-&gt;6)-alpha-D-glucosidic branch linkages in glycogen, amylopectin and their beta-limit dextrins.. Its pathway is glycan biosynthesis; starch biosynthesis. Involved in the trimming of pre-amylopectin chains. Accelerates the crystallization of nascent amylopectin molecules during starch synthesis. ISA1 and ISA2 work exclusively together as a multimeric holoenzyme. ISA1-ISA2 removes preferentially branches that are very close to other branches. Promotes negative gravitropic responses in shoots by facilitating starch granules (statoliths) formation in hypocotyls. The sequence is that of Isoamylase 1, chloroplastic from Arabidopsis thaliana (Mouse-ear cress).